Reading from the N-terminus, the 402-residue chain is Tyrosine--tRNA ligase (402 aa).

Positions Pro47 to His56 match the 'HIGH' region motif. The 'KMSKS' region signature appears at Lys232–Ser236. Lys235 is an ATP binding site. The S4 RNA-binding domain occupies Val341–Ile401.

It belongs to the class-I aminoacyl-tRNA synthetase family. TyrS type 2 subfamily. In terms of assembly, homodimer.

The protein localises to the cytoplasm. The catalysed reaction is tRNA(Tyr) + L-tyrosine + ATP = L-tyrosyl-tRNA(Tyr) + AMP + diphosphate + H(+). Catalyzes the attachment of tyrosine to tRNA(Tyr) in a two-step reaction: tyrosine is first activated by ATP to form Tyr-AMP and then transferred to the acceptor end of tRNA(Tyr). The polypeptide is Tyrosine--tRNA ligase (Helicobacter pylori (strain ATCC 700392 / 26695) (Campylobacter pylori)).